Consider the following 204-residue polypeptide: MNAPRPHDLLWGMPVSGLPTDAPQWALEVLASGQPVVVRRATCEAGWVAVGLRGHGRAQRLGALMRLTDIQRQQGPEALRVHGQSPWPALQALASVTPVLQARGLAWGPTGGVGYQLATGMEVVHAGSDLDLLLRTPRPLARAQARELLDILDCAPCRIDVQLETPSGAVALREWASFALRVLLKSPHGPRLVSDPWAVMERAP.

Residues aspartate 129 and aspartate 131 contribute to the active site.

It belongs to the MdcG family.

The enzyme catalyses apo-[malonate decarboxylase ACP] + 2'-(5''-triphospho-alpha-D-ribosyl)-3'-dephospho-CoA = holo-[malonate decarboxylase ACP] + diphosphate. Its function is as follows. Transfers 2'-(5-triphosphoribosyl)-3'-dephosphocoenzyme-A to the apo-[acyl-carrier-protein] of the malonate decarboxylase to yield holo-[acyl-carrier-protein]. In Pseudomonas putida (Arthrobacter siderocapsulatus), this protein is Phosphoribosyl-dephospho-CoA transferase.